A 150-amino-acid chain; its full sequence is D-aminoacyl-tRNA deacylase (150 aa).

Positions 138–139 match the Gly-cisPro motif, important for rejection of L-amino acids motif; that stretch reads GP.

It belongs to the DTD family. As to quaternary structure, homodimer.

It localises to the cytoplasm. The catalysed reaction is glycyl-tRNA(Ala) + H2O = tRNA(Ala) + glycine + H(+). It carries out the reaction a D-aminoacyl-tRNA + H2O = a tRNA + a D-alpha-amino acid + H(+). An aminoacyl-tRNA editing enzyme that deacylates mischarged D-aminoacyl-tRNAs. Also deacylates mischarged glycyl-tRNA(Ala), protecting cells against glycine mischarging by AlaRS. Acts via tRNA-based rather than protein-based catalysis; rejects L-amino acids rather than detecting D-amino acids in the active site. By recycling D-aminoacyl-tRNA to D-amino acids and free tRNA molecules, this enzyme counteracts the toxicity associated with the formation of D-aminoacyl-tRNA entities in vivo and helps enforce protein L-homochirality. The sequence is that of D-aminoacyl-tRNA deacylase from Chlorobium limicola (strain DSM 245 / NBRC 103803 / 6330).